The chain runs to 62 residues: Large ribosomal subunit protein bL28 (62 aa).

Belongs to the bacterial ribosomal protein bL28 family.

This is Large ribosomal subunit protein bL28 from Streptococcus mutans serotype c (strain ATCC 700610 / UA159).